Consider the following 132-residue polypeptide: Vesicle transport protein GOT1A (132 aa).

Residues 1–16 (MISITEWQKIGVGTTG) are Cytoplasmic-facing. Residues 17 to 37 (FGIFFILFGMLLYFDSVLLAF) traverse the membrane as a helical segment. The Lumenal segment spans residues 38–39 (GN). The helical transmembrane segment at 40-60 (LLFLTGLSLIIGLRRTFSFFF) threads the bilayer. Topologically, residues 61-68 (QRHKFKGT) are cytoplasmic. A helical transmembrane segment spans residues 69–89 (SFFLGGVVIVLLRWPLLGMCL). At 90-100 (ETYGFFSLFRG) the chain is on the lumenal side. Residues 101–121 (FFPVAFGFLGSASNIPFLSAL) traverse the membrane as a helical segment. The Cytoplasmic portion of the chain corresponds to 122–132 (FQRLQGTSSMV).

The protein belongs to the GOT1 family.

The protein resides in the golgi apparatus membrane. May be involved in fusion of ER-derived transport vesicles with the Golgi complex. This Bos taurus (Bovine) protein is Vesicle transport protein GOT1A.